Reading from the N-terminus, the 130-residue chain is Small ribosomal subunit protein uS11 (130 aa).

Belongs to the universal ribosomal protein uS11 family. In terms of assembly, part of the 30S ribosomal subunit. Interacts with proteins S7 and S18. Binds to IF-3.

In terms of biological role, located on the platform of the 30S subunit, it bridges several disparate RNA helices of the 16S rRNA. Forms part of the Shine-Dalgarno cleft in the 70S ribosome. The protein is Small ribosomal subunit protein uS11 of Latilactobacillus sakei subsp. sakei (strain 23K) (Lactobacillus sakei subsp. sakei).